A 440-amino-acid polypeptide reads, in one-letter code: 3-phosphoshikimate 1-carboxyvinyltransferase (440 aa).

3-phosphoshikimate-binding residues include lysine 19, serine 20, and arginine 24. A phosphoenolpyruvate-binding site is contributed by lysine 19. Residues glycine 92 and arginine 121 each contribute to the phosphoenolpyruvate site. Serine 166, glutamine 168, aspartate 315, and lysine 342 together coordinate 3-phosphoshikimate. Glutamine 168 is a binding site for phosphoenolpyruvate. The active-site Proton acceptor is aspartate 315. Arginine 346 and arginine 399 together coordinate phosphoenolpyruvate.

It belongs to the EPSP synthase family. In terms of assembly, monomer.

The protein resides in the cytoplasm. The catalysed reaction is 3-phosphoshikimate + phosphoenolpyruvate = 5-O-(1-carboxyvinyl)-3-phosphoshikimate + phosphate. It functions in the pathway metabolic intermediate biosynthesis; chorismate biosynthesis; chorismate from D-erythrose 4-phosphate and phosphoenolpyruvate: step 6/7. Its function is as follows. Catalyzes the transfer of the enolpyruvyl moiety of phosphoenolpyruvate (PEP) to the 5-hydroxyl of shikimate-3-phosphate (S3P) to produce enolpyruvyl shikimate-3-phosphate and inorganic phosphate. This chain is 3-phosphoshikimate 1-carboxyvinyltransferase, found in Leptospira borgpetersenii serovar Hardjo-bovis (strain JB197).